Consider the following 76-residue polypeptide: MLCLPVFIILLLLASTAASNPLETRIQSDLIRAALEDADMKTERGFLGVLMKGLKYLGKVVPIGSLVKDLLSSSDE.

An N-terminal signal peptide occupies residues 1–19 (MLCLPVFIILLLLASTAAS). Positions 20 to 52 (NPLETRIQSDLIRAALEDADMKTERGFLGVLMK) are excised as a propeptide.

Belongs to the conotoxin T superfamily. As to expression, expressed by the venom duct.

It is found in the secreted. This chain is Conotoxin ArMLCL-022, found in Conus arenatus (Sand-dusted cone).